Here is a 114-residue protein sequence, read N- to C-terminus: MGCRLLCCAVLCLLGAVPIDTEVTQTPKHLVMGMTNKKSLKCEQHMGHRAMYWYKQKAKKPPELMFVYSYEKLSINESVPSRFSPECPNSSLLNLHLHALQPEDSALYLCASSQ.

The first 21 residues, 1-21, serve as a signal peptide directing secretion; sequence MGCRLLCCAVLCLLGAVPIDT. One can recognise an Ig-like domain in the interval 22 to 114; that stretch reads EVTQTPKHLV…SALYLCASSQ (93 aa). Cysteines 42 and 110 form a disulfide. N-linked (GlcNAc...) asparagine glycosylation is found at asparagine 76 and asparagine 89.

In terms of assembly, alpha-beta TR is a heterodimer composed of an alpha and beta chain; disulfide-linked. The alpha-beta TR is associated with the transmembrane signaling CD3 coreceptor proteins to form the TR-CD3 (TcR or TCR). The assembly of alpha-beta TR heterodimers with CD3 occurs in the endoplasmic reticulum where a single alpha-beta TR heterodimer associates with one CD3D-CD3E heterodimer, one CD3G-CD3E heterodimer and one CD247 homodimer forming a stable octameric structure. CD3D-CD3E and CD3G-CD3E heterodimers preferentially associate with TR alpha and TR beta chains, respectively. The association of the CD247 homodimer is the last step of TcR assembly in the endoplasmic reticulum and is required for transport to the cell surface.

The protein localises to the cell membrane. Functionally, v region of the variable domain of T cell receptor (TR) beta chain that participates in the antigen recognition. Alpha-beta T cell receptors are antigen specific receptors which are essential to the immune response and are present on the cell surface of T lymphocytes. Recognize peptide-major histocompatibility (MH) (pMH) complexes that are displayed by antigen presenting cells (APC), a prerequisite for efficient T cell adaptive immunity against pathogens. Binding of alpha-beta TR to pMH complex initiates TR-CD3 clustering on the cell surface and intracellular activation of LCK that phosphorylates the ITAM motifs of CD3G, CD3D, CD3E and CD247 enabling the recruitment of ZAP70. In turn ZAP70 phosphorylates LAT, which recruits numerous signaling molecules to form the LAT signalosome. The LAT signalosome propagates signal branching to three major signaling pathways, the calcium, the mitogen-activated protein kinase (MAPK) kinase and the nuclear factor NF-kappa-B (NF-kB) pathways, leading to the mobilization of transcription factors that are critical for gene expression and essential for T cell growth and differentiation. The T cell repertoire is generated in the thymus, by V-(D)-J rearrangement. This repertoire is then shaped by intrathymic selection events to generate a peripheral T cell pool of self-MH restricted, non-autoaggressive T cells. Post-thymic interaction of alpha-beta TR with the pMH complexes shapes TR structural and functional avidity. This is T cell receptor beta variable 4-1 from Homo sapiens (Human).